The primary structure comprises 240 residues: Type II restriction enzyme DdeI (240 aa).

The enzyme catalyses Endonucleolytic cleavage of DNA to give specific double-stranded fragments with terminal 5'-phosphates.. Functionally, a P subtype restriction enzyme that recognizes the double-stranded sequence 5'-CTNAG-3' and cleaves after C-1. The sequence is that of Type II restriction enzyme DdeI (ddeIR) from Desulfomicrobium norvegicum (strain DSM 1741 / NCIMB 8310) (Desulfovibrio baculatus (strain Norway 4)).